Consider the following 344-residue polypeptide: Ferrochelatase (344 aa).

Residues His214 and Glu295 each contribute to the Fe cation site.

Belongs to the ferrochelatase family.

The protein localises to the cytoplasm. It carries out the reaction heme b + 2 H(+) = protoporphyrin IX + Fe(2+). It functions in the pathway porphyrin-containing compound metabolism; protoheme biosynthesis; protoheme from protoporphyrin-IX: step 1/1. Catalyzes the ferrous insertion into protoporphyrin IX. This is Ferrochelatase from Rhizobium etli (strain CIAT 652).